The sequence spans 520 residues: Transactivator/viroplasmin protein (520 aa).

Residues 487–520 (QDASADSGPKDGPPPTRSIVEKEDVPTTSSKQVD) are disordered.

Belongs to the caulimoviridae viroplasmin family.

The protein localises to the host cytoplasm. Functionally, enhances the ribosomal termination-reinitiation event leading to the translation of major open reading frames on the polycistronic viral RNAs. This chain is Transactivator/viroplasmin protein, found in Cauliflower mosaic virus (strain CM-1841) (CaMV).